The sequence spans 89 residues: Signal recognition particle 19 kDa protein (89 aa).

It belongs to the SRP19 family. Part of the signal recognition particle protein translocation system, which is composed of SRP and FtsY. Archaeal SRP consists of a 7S RNA molecule of 300 nucleotides and two protein subunits: SRP54 and SRP19.

Its subcellular location is the cytoplasm. In terms of biological role, involved in targeting and insertion of nascent membrane proteins into the cytoplasmic membrane. Binds directly to 7S RNA and mediates binding of the 54 kDa subunit of the SRP. In Methanococcus vannielii (strain ATCC 35089 / DSM 1224 / JCM 13029 / OCM 148 / SB), this protein is Signal recognition particle 19 kDa protein.